Reading from the N-terminus, the 103-residue chain is DNA-directed RNA polymerase subunit omega (103 aa).

The protein belongs to the RNA polymerase subunit omega family. As to quaternary structure, the RNAP catalytic core consists of 2 alpha, 1 beta, 1 beta' and 1 omega subunit. When a sigma factor is associated with the core the holoenzyme is formed, which can initiate transcription.

It catalyses the reaction RNA(n) + a ribonucleoside 5'-triphosphate = RNA(n+1) + diphosphate. In terms of biological role, promotes RNA polymerase assembly. Latches the N- and C-terminal regions of the beta' subunit thereby facilitating its interaction with the beta and alpha subunits. The protein is DNA-directed RNA polymerase subunit omega of Streptococcus agalactiae serotype III (strain NEM316).